A 331-amino-acid polypeptide reads, in one-letter code: Large ribosomal subunit protein uL3 (331 aa).

The protein belongs to the universal ribosomal protein uL3 family. In terms of assembly, part of the 50S ribosomal subunit. Forms a cluster with proteins L14 and L24e.

Its function is as follows. One of the primary rRNA binding proteins, it binds directly near the 3'-end of the 23S rRNA, where it nucleates assembly of the 50S subunit. This Archaeoglobus fulgidus (strain ATCC 49558 / DSM 4304 / JCM 9628 / NBRC 100126 / VC-16) protein is Large ribosomal subunit protein uL3.